The primary structure comprises 60 residues: Photosystem II reaction center protein L (60 aa).

The helical transmembrane segment at 39–59 (SLYWGLLLIFVLAVLFSSYIF) threads the bilayer.

Belongs to the PsbL family. PSII is composed of 1 copy each of membrane proteins PsbA, PsbB, PsbC, PsbD, PsbE, PsbF, PsbH, PsbI, PsbJ, PsbK, PsbL, PsbM, PsbT, PsbX, PsbY, PsbZ, Psb30/Ycf12, at least 3 peripheral proteins of the oxygen-evolving complex and a large number of cofactors. It forms dimeric complexes.

It localises to the plastid. The protein localises to the chloroplast thylakoid membrane. Functionally, one of the components of the core complex of photosystem II (PSII). PSII is a light-driven water:plastoquinone oxidoreductase that uses light energy to abstract electrons from H(2)O, generating O(2) and a proton gradient subsequently used for ATP formation. It consists of a core antenna complex that captures photons, and an electron transfer chain that converts photonic excitation into a charge separation. This subunit is found at the monomer-monomer interface and is required for correct PSII assembly and/or dimerization. This chain is Photosystem II reaction center protein L, found in Oedogonium cardiacum (Filamentous green alga).